Consider the following 114-residue polypeptide: Ferredoxin (114 aa).

Cys-9 and Cys-17 together coordinate [3Fe-4S] cluster. Residues Cys-21, Cys-40, Cys-43, and Cys-46 each contribute to the [4Fe-4S] cluster site. Residues 31–60 (RMLYINPDECVDCGACKPACRVEAIYWEGD) form the 4Fe-4S ferredoxin-type domain. Cys-50 provides a ligand contact to [3Fe-4S] cluster.

[4Fe-4S] cluster is required as a cofactor. Requires [3Fe-4S] cluster as cofactor.

Its function is as follows. Ferredoxins are iron-sulfur proteins that transfer electrons in a wide variety of metabolic reactions. The polypeptide is Ferredoxin (fdxA) (Mycobacterium tuberculosis (strain ATCC 25618 / H37Rv)).